A 312-amino-acid polypeptide reads, in one-letter code: Putative ring-cleaving dioxygenase MhqO (312 aa).

VOC domains follow at residues 7-131 (GIHH…IVER) and 152-269 (GFGG…IATD). Fe cation contacts are provided by His10, His217, and Glu265.

Belongs to the extradiol ring-cleavage dioxygenase family. Fe(2+) serves as cofactor.

The protein resides in the cytoplasm. Its function is as follows. Putative ring-cleavage dioxygenase that may contribute to the degradation of aromatic compounds. The chain is Putative ring-cleaving dioxygenase MhqO (mhqO) from Bacillus subtilis (strain 168).